Consider the following 190-residue polypeptide: dCTP deaminase (190 aa).

113–118 (KSTYAR) is a dCTP binding site. The Proton donor/acceptor role is filled by glutamate 139. Residues glutamine 158, tyrosine 172, lysine 181, and glutamine 182 each contribute to the dCTP site.

This sequence belongs to the dCTP deaminase family. As to quaternary structure, homotrimer.

It carries out the reaction dCTP + H2O + H(+) = dUTP + NH4(+). Its pathway is pyrimidine metabolism; dUMP biosynthesis; dUMP from dCTP (dUTP route): step 1/2. Functionally, catalyzes the deamination of dCTP to dUTP. The protein is dCTP deaminase of Chlamydia abortus (strain DSM 27085 / S26/3) (Chlamydophila abortus).